Reading from the N-terminus, the 150-residue chain is Large ribosomal subunit protein bL9 (150 aa).

Belongs to the bacterial ribosomal protein bL9 family.

Functionally, binds to the 23S rRNA. The sequence is that of Large ribosomal subunit protein bL9 from Arthrobacter sp. (strain FB24).